The sequence spans 360 residues: UDP-N-acetylglucosamine--N-acetylmuramyl-(pentapeptide) pyrophosphoryl-undecaprenol N-acetylglucosamine transferase (360 aa).

UDP-N-acetyl-alpha-D-glucosamine contacts are provided by Ser198 and Gln289.

The protein belongs to the glycosyltransferase 28 family. MurG subfamily.

It is found in the cell membrane. The enzyme catalyses Mur2Ac(oyl-L-Ala-gamma-D-Glu-L-Lys-D-Ala-D-Ala)-di-trans,octa-cis-undecaprenyl diphosphate + UDP-N-acetyl-alpha-D-glucosamine = beta-D-GlcNAc-(1-&gt;4)-Mur2Ac(oyl-L-Ala-gamma-D-Glu-L-Lys-D-Ala-D-Ala)-di-trans,octa-cis-undecaprenyl diphosphate + UDP + H(+). The protein operates within cell wall biogenesis; peptidoglycan biosynthesis. Cell wall formation. Catalyzes the transfer of a GlcNAc subunit on undecaprenyl-pyrophosphoryl-MurNAc-pentapeptide (lipid intermediate I) to form undecaprenyl-pyrophosphoryl-MurNAc-(pentapeptide)GlcNAc (lipid intermediate II). This is UDP-N-acetylglucosamine--N-acetylmuramyl-(pentapeptide) pyrophosphoryl-undecaprenol N-acetylglucosamine transferase from Streptococcus pyogenes serotype M18 (strain MGAS8232).